We begin with the raw amino-acid sequence, 1013 residues long: Hemoglobin-binding protein A (1013 aa).

A signal peptide spans 1–24; it reads MTNFKFSLLACSIAFALNASTAYA. 8 repeat units span residues 26 to 29, 30 to 33, 34 to 37, 38 to 41, 42 to 45, 46 to 49, 50 to 53, and 54 to 57. An 8 X 4 AA tandem repeats of Q-P-T-N region spans residues 26–57; that stretch reads QPTNQPTNQPTNQPTNQPTNQPTNQPTNQPTN. A compositionally biased stretch (low complexity) spans 26–58; it reads QPTNQPTNQPTNQPTNQPTNQPTNQPTNQPTNQ. The segment at 26–61 is disordered; that stretch reads QPTNQPTNQPTNQPTNQPTNQPTNQPTNQPTNQDSN. The short motif at 67–74 is the TonB box element; sequence EQINVSGS. Positions 78 to 205 constitute a TBDR plug domain; sequence SDSKTPPKIA…LGGSVIYKTK (128 aa). The TBDR beta-barrel domain maps to 213–1013; sequence NKDYYVSYKK…NYKMSVQFEF (801 aa). Residues 996 to 1013 carry the TonB C-terminal box motif; sequence NRFYAPGRNYKMSVQFEF.

It belongs to the TonB-dependent receptor family. Hemoglobin/haptoglobin binding protein subfamily.

It is found in the cell outer membrane. Functionally, acts as a receptor for hemoglobin of the human host and is required for heme uptake. The sequence is that of Hemoglobin-binding protein A (hgbA) from Haemophilus influenzae.